A 338-amino-acid chain; its full sequence is Lipoate-protein ligase A (338 aa).

The BPL/LPL catalytic domain maps to 29-216; it reads PATQRVLFLW…AFFAHYGERV (188 aa). ATP-binding positions include Arg-71, 76–79, and Lys-134; that span reads GAVF. Residue Lys-134 coordinates (R)-lipoate.

It belongs to the LplA family. In terms of assembly, monomer.

The protein resides in the cytoplasm. It catalyses the reaction L-lysyl-[lipoyl-carrier protein] + (R)-lipoate + ATP = N(6)-[(R)-lipoyl]-L-lysyl-[lipoyl-carrier protein] + AMP + diphosphate + H(+). It participates in protein modification; protein lipoylation via exogenous pathway; protein N(6)-(lipoyl)lysine from lipoate: step 1/2. The protein operates within protein modification; protein lipoylation via exogenous pathway; protein N(6)-(lipoyl)lysine from lipoate: step 2/2. Catalyzes both the ATP-dependent activation of exogenously supplied lipoate to lipoyl-AMP and the transfer of the activated lipoyl onto the lipoyl domains of lipoate-dependent enzymes. This chain is Lipoate-protein ligase A, found in Salmonella paratyphi B (strain ATCC BAA-1250 / SPB7).